The following is a 659-amino-acid chain: Enzymatic polyprotein (659 aa).

The protease stretch occupies residues 1 to 180 (MSLRNRTNPN…FLEEGGNHVD (180 aa)). Residue D34 is part of the active site. A Reverse transcriptase domain is found at 252-436 (LELKVIKPSK…EKINFLGLEI (185 aa)).

This sequence belongs to the caulimoviridae enzymatic polyprotein family.

It catalyses the reaction DNA(n) + a 2'-deoxyribonucleoside 5'-triphosphate = DNA(n+1) + diphosphate. Encodes for at least two polypeptides: protease (PR) and reverse transcriptase (RT). The protease processes the polyprotein in cis. Reverse transcriptase is multifunctional enzyme that converts the viral RNA genome into dsDNA in viral cytoplasmic capsids. This enzyme displays a DNA polymerase activity that can copy either DNA or RNA templates, and a ribonuclease H (RNase H) activity that cleaves the RNA strand of RNA-DNA heteroduplexes in a partially processive 3'- to 5'-endonucleasic mode. Neo-synthesized pregenomic RNA (pgRNA) are encapsidated, and reverse-transcribed inside the nucleocapsid. Partial (+)DNA is synthesized from the (-)DNA template and generates the relaxed circular DNA (RC-DNA) genome. After budding and infection, the RC-DNA migrates in the nucleus, and is converted into a plasmid-like covalently closed circular DNA (cccDNA). The polypeptide is Enzymatic polyprotein (Dianthus caryophyllus (Carnation)).